The following is a 316-amino-acid chain: Protease HtpX homolog (316 aa).

A helical membrane pass occupies residues 16-36; it reads LFMGAGFLIGGATGMMIALVF. Zn(2+) is bound at residue His-134. Glu-135 is a catalytic residue. His-138 is a Zn(2+) binding site. The next 2 membrane-spanning stretches (helical) occupy residues 149 to 169 and 180 to 200; these read VTATIAGAISALANFAFFFGG and LGGMIGAILIAILAPIAAMLV. Zn(2+) is bound at residue Glu-209. Residues 295–316 are disordered; sequence PVMAATTSSSVPLSGERGGPWS.

It belongs to the peptidase M48B family. Requires Zn(2+) as cofactor.

It is found in the cell inner membrane. The sequence is that of Protease HtpX homolog from Caulobacter vibrioides (strain ATCC 19089 / CIP 103742 / CB 15) (Caulobacter crescentus).